Here is a 251-residue protein sequence, read N- to C-terminus: Protein unc-119 homolog B (251 aa).

Residues 1 to 28 (MSGSNPKAAAAASAAGPGGLVAGKEEKK) form a disordered region. Ser2 bears the N-acetylserine mark. Lys24 is modified (N6-acetyllysine). Tyr142 contributes to the tetradecanoate binding site.

Belongs to the PDE6D/unc-119 family. As to quaternary structure, found in a complex with ARL3, RP2 and UNC119B; RP2 induces hydrolysis of GTP ARL3 in the complex, leading to the release of UNC119B. Interacts with NPHP3 (when myristoylated). Interacts with CYS1 (when myristoylated). Interacts with MACIR; interaction only takes place when UNC119B is not liganded with myristoylated proteins.

The protein resides in the cell projection. It is found in the cilium. Its function is as follows. Myristoyl-binding protein that acts as a cargo adapter: specifically binds the myristoyl moiety of a subset of N-terminally myristoylated proteins and is required for their localization. Binds myristoylated NPHP3 and plays a key role in localization of NPHP3 to the primary cilium membrane. Does not bind all myristoylated proteins. Probably plays a role in trafficking proteins in photoreceptor cells. In Homo sapiens (Human), this protein is Protein unc-119 homolog B (UNC119B).